A 432-amino-acid polypeptide reads, in one-letter code: Nuclear pore complex-interacting protein family member B8 (432 aa).

Disordered stretches follow at residues 260–280 (RMGR…NSLS) and 353–420 (SPLP…LRTR). The segment covering 270–280 (QQHSITDNSLS) has biased composition (polar residues). The segment covering 374–402 (EVEKPPKPKRWRVDEVEQSPKPKRQREAE) has biased composition (basic and acidic residues). Over residues 408-420 (KPKRRRLSKLRTR) the composition is skewed to basic residues.

It belongs to the NPIP family.

The polypeptide is Nuclear pore complex-interacting protein family member B8 (NPIPB8) (Homo sapiens (Human)).